The primary structure comprises 259 residues: Pimeloyl-[acyl-carrier protein] methyl ester esterase (259 aa).

An AB hydrolase-1 domain is found at 15–242 (HLVLLHGWGL…AAHAPFISHP (228 aa)). Residues Trp22, 82-83 (SL), and 143-147 (FLALQ) each bind substrate. Ser82 serves as the catalytic Nucleophile. Residues Asp207 and His235 contribute to the active site. His235 lines the substrate pocket.

This sequence belongs to the AB hydrolase superfamily. Carboxylesterase BioH family. As to quaternary structure, monomer.

It localises to the cytoplasm. It carries out the reaction 6-carboxyhexanoyl-[ACP] methyl ester + H2O = 6-carboxyhexanoyl-[ACP] + methanol + H(+). The protein operates within cofactor biosynthesis; biotin biosynthesis. Its function is as follows. The physiological role of BioH is to remove the methyl group introduced by BioC when the pimeloyl moiety is complete. It allows to synthesize pimeloyl-ACP via the fatty acid synthetic pathway through the hydrolysis of the ester bonds of pimeloyl-ACP esters. The polypeptide is Pimeloyl-[acyl-carrier protein] methyl ester esterase (Cronobacter sakazakii (strain ATCC BAA-894) (Enterobacter sakazakii)).